Here is a 142-residue protein sequence, read N- to C-terminus: Large ribosomal subunit protein uL13c (142 aa).

This sequence belongs to the universal ribosomal protein uL13 family. As to quaternary structure, part of the 50S ribosomal subunit.

It localises to the plastid. Its subcellular location is the chloroplast. In Pyropia yezoensis (Susabi-nori), this protein is Large ribosomal subunit protein uL13c.